Consider the following 372-residue polypeptide: Peptidyl-prolyl cis-trans isomerase D (372 aa).

One can recognise a PPIase cyclophilin-type domain in the interval 9–175 (FFDISIGGKP…KEVKIEDCGV (167 aa)). TPR repeat units lie at residues 220-253 (VEAV…LKQY), 271-304 (VSLF…DNTD), and 309-342 (AKAL…QPHD).

It belongs to the cyclophilin-type PPIase family. PPIase D subfamily.

The protein localises to the cytoplasm. The catalysed reaction is [protein]-peptidylproline (omega=180) = [protein]-peptidylproline (omega=0). In terms of biological role, PPIases accelerate the folding of proteins. It catalyzes the cis-trans isomerization of proline imidic peptide bonds in oligopeptides. The chain is Peptidyl-prolyl cis-trans isomerase D (CPR6) from Kluyveromyces lactis (strain ATCC 8585 / CBS 2359 / DSM 70799 / NBRC 1267 / NRRL Y-1140 / WM37) (Yeast).